A 431-amino-acid chain; its full sequence is Enolase (431 aa).

A (2R)-2-phosphoglycerate-binding site is contributed by Gln167. Glu209 functions as the Proton donor in the catalytic mechanism. The Mg(2+) site is built by Asp246, Glu289, and Asp316. Residues Lys341, Arg370, Ser371, and Lys392 each coordinate (2R)-2-phosphoglycerate. The Proton acceptor role is filled by Lys341.

Belongs to the enolase family. As to quaternary structure, component of the RNA degradosome, a multiprotein complex involved in RNA processing and mRNA degradation. Mg(2+) is required as a cofactor.

The protein resides in the cytoplasm. The protein localises to the secreted. Its subcellular location is the cell surface. The catalysed reaction is (2R)-2-phosphoglycerate = phosphoenolpyruvate + H2O. It functions in the pathway carbohydrate degradation; glycolysis; pyruvate from D-glyceraldehyde 3-phosphate: step 4/5. Functionally, catalyzes the reversible conversion of 2-phosphoglycerate (2-PG) into phosphoenolpyruvate (PEP). It is essential for the degradation of carbohydrates via glycolysis. This chain is Enolase, found in Hahella chejuensis (strain KCTC 2396).